The sequence spans 351 residues: dTDP-glucose 4,6-dehydratase (351 aa).

NAD(+) contacts are provided by residues 12–13, 32–35, 58–59, 80–84, and Thr-99; these read FI, DALT, DI, and FAAES. Residue Ser-84 participates in substrate binding. Thr-133 contacts substrate. The Proton donor role is filled by Asp-134. Catalysis depends on proton acceptor residues Glu-135 and Tyr-158. 158–162 is an NAD(+) binding site; it reads YSASK. Position 187 (Asn-187) interacts with substrate. Asn-188 is an NAD(+) binding site. Residues 197 to 198, 213 to 215, Arg-222, Asn-257, and 289 to 293 each bind substrate; these read KL, PVY, and DRPGH.

The protein belongs to the NAD(P)-dependent epimerase/dehydratase family. dTDP-glucose dehydratase subfamily. As to quaternary structure, homodimer. Requires NAD(+) as cofactor.

The enzyme catalyses dTDP-alpha-D-glucose = dTDP-4-dehydro-6-deoxy-alpha-D-glucose + H2O. It participates in carbohydrate biosynthesis; dTDP-L-rhamnose biosynthesis. Its pathway is bacterial outer membrane biogenesis; LPS O-antigen biosynthesis. Its function is as follows. Catalyzes the dehydration of dTDP-D-glucose to form dTDP-6-deoxy-D-xylo-4-hexulose via a three-step process involving oxidation, dehydration and reduction. In Xanthomonas campestris pv. campestris (strain ATCC 33913 / DSM 3586 / NCPPB 528 / LMG 568 / P 25), this protein is dTDP-glucose 4,6-dehydratase (rfbB).